The following is a 107-amino-acid chain: UPF0102 protein CTN_0433 (107 aa).

Belongs to the UPF0102 family.

In Thermotoga neapolitana (strain ATCC 49049 / DSM 4359 / NBRC 107923 / NS-E), this protein is UPF0102 protein CTN_0433.